The sequence spans 126 residues: Protein HEAT-INDUCED TAS1 TARGET 3 (126 aa).

This sequence belongs to the heat induced plant HTT protein family. Expressed in seedlings, leaves, stems, inflorescences and siliques.

The protein localises to the cytoplasm. The protein resides in the nucleus. Mediates both basal and acquired thermotolerance. The protein is Protein HEAT-INDUCED TAS1 TARGET 3 of Arabidopsis thaliana (Mouse-ear cress).